The primary structure comprises 658 residues: Translation factor GUF1, mitochondrial (658 aa).

One can recognise a tr-type G domain in the interval 45 to 231 (ENYRNFSIVA…AVIDRIPPPT (187 aa)). GTP is bound by residues 54–61 (AHIDHGKS), 123–127 (DTPGH), and 177–180 (NKID).

This sequence belongs to the TRAFAC class translation factor GTPase superfamily. Classic translation factor GTPase family. LepA subfamily.

The protein localises to the mitochondrion inner membrane. It carries out the reaction GTP + H2O = GDP + phosphate + H(+). In terms of biological role, promotes mitochondrial protein synthesis. May act as a fidelity factor of the translation reaction, by catalyzing a one-codon backward translocation of tRNAs on improperly translocated ribosomes. Binds to mitochondrial ribosomes in a GTP-dependent manner. The chain is Translation factor GUF1, mitochondrial from Vanderwaltozyma polyspora (strain ATCC 22028 / DSM 70294 / BCRC 21397 / CBS 2163 / NBRC 10782 / NRRL Y-8283 / UCD 57-17) (Kluyveromyces polysporus).